The following is a 122-amino-acid chain: Large ribosomal subunit protein uL14 (122 aa).

Belongs to the universal ribosomal protein uL14 family. As to quaternary structure, part of the 50S ribosomal subunit. Forms a cluster with proteins L3 and L19. In the 70S ribosome, L14 and L19 interact and together make contacts with the 16S rRNA in bridges B5 and B8.

Binds to 23S rRNA. Forms part of two intersubunit bridges in the 70S ribosome. This chain is Large ribosomal subunit protein uL14, found in Clostridium kluyveri (strain ATCC 8527 / DSM 555 / NBRC 12016 / NCIMB 10680 / K1).